Here is a 411-residue protein sequence, read N- to C-terminus: Arginine deiminase (411 aa).

The active-site Amidino-cysteine intermediate is the Cys399.

It belongs to the arginine deiminase family.

It is found in the cytoplasm. It carries out the reaction L-arginine + H2O = L-citrulline + NH4(+). Its pathway is amino-acid degradation; L-arginine degradation via ADI pathway; carbamoyl phosphate from L-arginine: step 1/2. The sequence is that of Arginine deiminase from Latilactobacillus sakei subsp. sakei (strain 23K) (Lactobacillus sakei subsp. sakei).